The chain runs to 420 residues: UDP-N-acetylglucosamine 1-carboxyvinyltransferase (420 aa).

Lysine 22 to asparagine 23 is a phosphoenolpyruvate binding site. Arginine 93 lines the UDP-N-acetyl-alpha-D-glucosamine pocket. Catalysis depends on cysteine 117, which acts as the Proton donor. Cysteine 117 is modified (2-(S-cysteinyl)pyruvic acid O-phosphothioketal). UDP-N-acetyl-alpha-D-glucosamine is bound by residues aspartate 307 and isoleucine 329.

Belongs to the EPSP synthase family. MurA subfamily.

Its subcellular location is the cytoplasm. It carries out the reaction phosphoenolpyruvate + UDP-N-acetyl-alpha-D-glucosamine = UDP-N-acetyl-3-O-(1-carboxyvinyl)-alpha-D-glucosamine + phosphate. The protein operates within cell wall biogenesis; peptidoglycan biosynthesis. Functionally, cell wall formation. Adds enolpyruvyl to UDP-N-acetylglucosamine. In Shewanella halifaxensis (strain HAW-EB4), this protein is UDP-N-acetylglucosamine 1-carboxyvinyltransferase.